The sequence spans 84 residues: uncharacterized protein (84 aa).

This is an uncharacterized protein from Schizosaccharomyces pombe (strain 972 / ATCC 24843) (Fission yeast).